The sequence spans 347 residues: BSD domain-containing protein C22A12.14c (347 aa).

Phosphothreonine occurs at positions 123 and 125. In terms of domain architecture, BSD spans Trp167–Gln219. The tract at residues Asp229 to Glu347 is disordered. 3 positions are modified to phosphoserine: Ser235, Ser241, and Ser246. The span at Arg240–Val251 shows a compositional bias: acidic residues. Positions His297–Lys312 are enriched in basic and acidic residues. The segment covering Val313–Ser325 has biased composition (low complexity). The segment covering Glu327–Asp337 has biased composition (basic and acidic residues). The segment covering Asp338–Glu347 has biased composition (acidic residues).

It is found in the cytoplasm. The protein is BSD domain-containing protein C22A12.14c of Schizosaccharomyces pombe (strain 972 / ATCC 24843) (Fission yeast).